The chain runs to 849 residues: MHKHQHCCKCPECYEVTRLAALRRLEPPGYGDWQVPDPYGPSGGNGASSGYGGYSSQTLPSQAGATPTPRTKAKLIPTGRDVGPVPPKPVPGKNTPKLNGSGPSWWPECTCTNRDWYEQASPAPLLVNPEALEPSLSVNGSDGMFKYEEIVLERGNSGLGFSIAGGIDNPHVPDDPGIFITKIIPGGAAAMDGRLGVNDCVLRVNEVDVSEVVHSRAVEALKEAGPVVRLVVRRRQPPPETIMEVNLLKGPKGLGFSIAGGIGNQHIPGDNSIYITKIIEGGAAQKDGRLQIGDRLLAVNNTNLQDVRHEEAVASLKNTSDMVYLKVAKPGSLHLNDMYAPPDYASTFTALADNHISHNSSLGYLGAVESKVTYPAPPQVPPTRYSPIPRHMLAEEDFTREPRKIILHKGSTGLGFNIVGGEDGEGIFVSFILAGGPADLSGELRRGDRILSVNGVNLRNATHEQAAAALKRAGQSVTIVAQYRPEEYSRFESKIHDLREQMMNSSMSSGSGSLRTSEKRSLYVRALFDYDRTRDSCLPSQGLSFSYGDILHVINASDDEWWQARLVTPHGESEQIGVIPSKKRVEKKERARLKTVKFHARTGMIESNRDFPGLSDDYYGAKNLKGVTSNTSDSESSSKGQEDAILSYEPVTRQEIHYARPVIILGPMKDRVNDDLISEFPHKFGSCVPHTTRPRRDNEVDGQDYHFVVSREQMEKDIQDNKFIEAGQFNDNLYGTSIQSVRAVAERGKHCILDVSGNAIKRLQQAQLYPIAIFIKPKSIEALMEMNRRQTYEQANKIFDKAMKLEQEFGEYFTAIVQGDSLEEIYNKIKQIIEDQSGHYIWVPSPEKL.

A disordered region spans residues 32-101 (DWQVPDPYGP…GKNTPKLNGS (70 aa)). Gly residues predominate over residues 41–53 (PSGGNGASSGYGG). A compositionally biased stretch (polar residues) spans 57 to 69 (QTLPSQAGATPTP). 3 consecutive PDZ domains span residues 149 to 235 (EIVL…VRRR), 244 to 330 (EVNL…VAKP), and 404 to 484 (KIIL…AQYR). The residue at position 157 (Ser157) is a Phosphoserine. The 71-residue stretch at 519–589 (KRSLYVRALF…PSKKRVEKKE (71 aa)) folds into the SH3 domain. Residues 659–834 (ARPVIILGPM…IYNKIKQIIE (176 aa)) form the Guanylate kinase-like domain. Tyr705 is modified (phosphotyrosine).

It belongs to the MAGUK family. Interacts through its PDZ domains with NETO1 and APC. Interacts through its first two PDZ domains with ERBB4. Interacts through its third PDZ domain with NLGN1, and probably with NLGN2 and NLGN3. Interacts through its PDZ domains with GRIN2B and SYNGAP1. Interacts through its guanylate kinase-like domain with DLGAP1, DLGAP2, DLGAP3 and DLGAP4. Interacts with FRMPD4 (via C-terminus). Interacts with LRFN2. Interacts with LRFN1 and LRFN4. Interacts with FLTP. Interacts with DGKI (via PDZ-binding motif).

Functionally, required for learning most likely through its role in synaptic plasticity following NMDA receptor signaling. In Rattus norvegicus (Rat), this protein is Disks large homolog 3 (Dlg3).